A 407-amino-acid polypeptide reads, in one-letter code: Endo-1,4-beta-xylanase D (407 aa).

Positions 1–19 (MTLVKSILLALAAGHVAQA) are cleaved as a signal peptide. The region spanning 20-333 (QLNTAAKAAG…KPAYYGILAG (314 aa)) is the GH10 domain. An N-linked (GlcNAc...) asparagine glycan is attached at Asn118. Glu148 (proton donor) is an active-site residue. The Nucleophile role is filled by Glu255. Cys283 and Cys289 form a disulfide bridge. Residues 337 to 364 (GSGSSSSTSSTTLITTTTPTASSSTTSA) are disordered. The CBM1 domain occupies 371–407 (SGAAHWGQCGGIGWSGPTICVSPYTCQVLNPYYSQCL).

This sequence belongs to the glycosyl hydrolase 10 (cellulase F) family.

It is found in the secreted. It carries out the reaction Endohydrolysis of (1-&gt;4)-beta-D-xylosidic linkages in xylans.. Its pathway is glycan degradation; xylan degradation. With respect to regulation, inhibited by wheat xylanase inhibiting protein I (XIP-I). Functionally, endo-1,4-beta-xylanase involved in the hydrolysis of xylan, a major structural heterogeneous polysaccharide found in plant biomass representing the second most abundant polysaccharide in the biosphere, after cellulose. Shows an endo-mode of action on xylan forming mainly xylobiose and short-chain xylooligosaccharides (XOS). The chain is Endo-1,4-beta-xylanase D (xynD) from Talaromyces funiculosus (Fruitlet core rot fungus).